A 165-amino-acid polypeptide reads, in one-letter code: Lithostathine (165 aa).

Positions 1 to 21 (MTRNKYFILLSCLMVLSPSQG) are cleaved as a signal peptide. Pyrrolidone carboxylic acid is present on Gln-22. Residues 33–163 (ITCPEGSNAY…DAQLSFVCKF (131 aa)) form the C-type lectin domain. Cystine bridges form between Cys-35-Cys-46, Cys-63-Cys-161, and Cys-136-Cys-153. A glycan (N-linked (GlcNAc...) asparagine) is linked at Asn-129.

Expressed only in regenerating islets, but not in normal pancreatic islets, insulinomas or regenerating liver.

It localises to the secreted. Functionally, might act as an inhibitor of spontaneous calcium carbonate precipitation. This Rattus norvegicus (Rat) protein is Lithostathine (Reg1).